The chain runs to 478 residues: Pyrrolysine--tRNA ligase (478 aa).

A disordered region spans residues 106 to 188; sequence VMPKSVARTP…TSAMPASTSA (83 aa). A compositionally biased stretch (polar residues) spans 122 to 132; it reads APVQTLPSESQ. Residues 133 to 188 are compositionally biased toward low complexity; that stretch reads PAPTTPISASTTAPASTSTTAPAPASTTAPAPASTTAPASASTTISTSAMPASTSA.

Belongs to the class-II aminoacyl-tRNA synthetase family.

The protein resides in the cytoplasm. The catalysed reaction is tRNA(Pyl) + L-pyrrolysine + ATP = L-pyrrolysyl-tRNA(Pyl) + AMP + diphosphate. Catalyzes the attachment of pyrrolysine to tRNA(Pyl). Pyrrolysine is a lysine derivative encoded by the termination codon UAG. The chain is Pyrrolysine--tRNA ligase from Methanosarcina thermophila.